A 346-amino-acid polypeptide reads, in one-letter code: Fe(3+) ions import ATP-binding protein FbpC 1 (346 aa).

In terms of domain architecture, ABC transporter spans 5-235 (LEVDGVDKSF…PIDVPTAEFI (231 aa)). 37–44 (GPSGCGKT) is an ATP binding site.

It belongs to the ABC transporter superfamily. Fe(3+) ion importer (TC 3.A.1.10) family. The complex is composed of two ATP-binding proteins (FbpC), two transmembrane proteins (FbpB) and a solute-binding protein (FbpA).

It is found in the cell membrane. It catalyses the reaction Fe(3+)(out) + ATP + H2O = Fe(3+)(in) + ADP + phosphate + H(+). In terms of biological role, part of the ABC transporter complex FbpABC involved in Fe(3+) ions import. Responsible for energy coupling to the transport system. The sequence is that of Fe(3+) ions import ATP-binding protein FbpC 1 from Rhodococcus jostii (strain RHA1).